The sequence spans 371 residues: Putative glutamate--cysteine ligase 2 (371 aa).

Belongs to the glutamate--cysteine ligase type 2 family. YbdK subfamily.

The enzyme catalyses L-cysteine + L-glutamate + ATP = gamma-L-glutamyl-L-cysteine + ADP + phosphate + H(+). ATP-dependent carboxylate-amine ligase which exhibits weak glutamate--cysteine ligase activity. The sequence is that of Putative glutamate--cysteine ligase 2 from Burkholderia multivorans (strain ATCC 17616 / 249).